A 293-amino-acid chain; its full sequence is Probable E3 ubiquitin-protein ligase RNF144A-A (293 aa).

A TRIAD supradomain region spans residues 16–237; the sequence is PLVSCKLCLG…YDKGPCRNKL (222 aa). The Zn(2+) site is built by C20, C23, C43, C46, C111, C116, C135, C138, C143, C146, H151, C156, C186, and C189. The segment at 20–70 adopts an RING-type 1 zinc-finger fold; sequence CKLCLGEFPLEQMTTITQCQCVFCTMCLKQYVELLIKEGFETAISCPDSAC. The IBR-type zinc finger occupies 91 to 156; the sequence is QRYRKLQFEK…KASWHPDQDC (66 aa). The RING-type 2; atypical zinc-finger motif lies at 186–215; that stretch reads CPKCKVYIERDEGCAQMMCKNCKHAFCWYC. The active site involves C199. Residues C204, C207, C212, C215, H227, and C233 each contribute to the Zn(2+) site. The chain crosses the membrane as a helical span at residues 251–271; that stretch reads VVGIFAGFGLLLLVASPFLLL.

Belongs to the RBR family. RNF144 subfamily.

It localises to the membrane. It carries out the reaction [E2 ubiquitin-conjugating enzyme]-S-ubiquitinyl-L-cysteine + [acceptor protein]-L-lysine = [E2 ubiquitin-conjugating enzyme]-L-cysteine + [acceptor protein]-N(6)-ubiquitinyl-L-lysine.. It participates in protein modification; protein ubiquitination. In terms of biological role, E3 ubiquitin-protein ligase which accepts ubiquitin from E2 ubiquitin-conjugating enzymes ube2l3 and ube2l6 in the form of a thioester and then directly transfers the ubiquitin to targeted substrates. The polypeptide is Probable E3 ubiquitin-protein ligase RNF144A-A (rnf144aa) (Danio rerio (Zebrafish)).